A 40-amino-acid chain; its full sequence is Large ribosomal subunit protein bL36A (40 aa).

It belongs to the bacterial ribosomal protein bL36 family.

This Saccharopolyspora erythraea (strain ATCC 11635 / DSM 40517 / JCM 4748 / NBRC 13426 / NCIMB 8594 / NRRL 2338) protein is Large ribosomal subunit protein bL36A.